The primary structure comprises 647 residues: MFQNNPLLAQLKQQLHSQTLRVEGLVKGTEKGFGFLEVDGQKSYFIPPPHMKKVMHGDRVTAAIHTDKEREIAEPETLIEPFLNRFVGRIQKKENDNRLWITPDHPLLKDAIPCRPTNQVTHPFQHGDWAVAEMRHHPLKGSRGFHAEITGYITESDNHYAPWWVTLTRHNLERDAPAMTADCQMNDGDLERIDLTSLDFVTIDSATTEDMDDALHIAKQDDGSLKLSIAIADPTAYIAAGSELDQIAHQRAFTNYLPGFNIPMLPRDLSENLCSLRPNARRPALVCQVSILEDGQLGDDIAFFSTWVESKAKLVYDEVSDWLEKTGTWEPASEAIKTQITLLKEMSDRRNQWRHQNALIFKDRPDYRFILDENGYVLDIVVEQRRTANRIVEEAMITSNLCAAKILRDKLGFGIYNVHMGFEPLQIEQVVELLQENDIDAKTEELLTLDGFCKLRRELDKKPTQFLDSRIRRFQTFAEIKPEPGPHFGLGFDAYATWTSPIRKYSDMINHRLLKAIIQKTDVEQPSEETCLQLAERRRLNRMAERDVGDWLYARFLQPHAGTEQRFTAEIIDITRGGLRVRLADNGAVAFIPAPFLHAVRDELQCSQETGTVIIKGEVAYQLNDIIDVRIDEVRMETRNIVARPTA.

Residues 192–519 form the RNB domain; it reads RIDLTSLDFV…NHRLLKAIIQ (328 aa). The S1 motif domain maps to 564–646; the sequence is EQRFTAEIID…ETRNIVARPT (83 aa).

Belongs to the RNR ribonuclease family. RNase II subfamily.

The protein localises to the cytoplasm. The enzyme catalyses Exonucleolytic cleavage in the 3'- to 5'-direction to yield nucleoside 5'-phosphates.. In terms of biological role, involved in mRNA degradation. Hydrolyzes single-stranded polyribonucleotides processively in the 3' to 5' direction. The protein is Exoribonuclease 2 of Photorhabdus laumondii subsp. laumondii (strain DSM 15139 / CIP 105565 / TT01) (Photorhabdus luminescens subsp. laumondii).